Reading from the N-terminus, the 113-residue chain is Na(+)/H(+) antiporter subunit C1 (113 aa).

Transmembrane regions (helical) follow at residues 1-21 (MEII…YLVL), 28-48 (IVMG…TMGG), and 72-92 (LILT…VLAF).

Belongs to the CPA3 antiporters (TC 2.A.63) subunit C family. As to quaternary structure, may form a heterooligomeric complex that consists of seven subunits: mnhA1, mnhB1, mnhC1, mnhD1, mnhE1, mnhF1 and mnhG1.

It localises to the cell membrane. Its function is as follows. Mnh complex is a Na(+)/H(+) antiporter involved in Na(+) excretion. In Staphylococcus aureus (strain JH1), this protein is Na(+)/H(+) antiporter subunit C1 (mnhC1).